The chain runs to 247 residues: Protein GrpE (247 aa).

2 disordered regions span residues 1–68 (MKKN…KNDD) and 226–247 (PAEKQDEKKAEESEAADKKNEN). Composition is skewed to basic and acidic residues over residues 7-35 (KHADKKEAAKEELEKDLQPKDESAVKDEQ), 43-54 (TSKENPQEDKAE), and 228-247 (EKQDEKKAEESEAADKKNEN).

Belongs to the GrpE family. In terms of assembly, homodimer.

It localises to the cytoplasm. Its function is as follows. Participates actively in the response to hyperosmotic and heat shock by preventing the aggregation of stress-denatured proteins, in association with DnaK and GrpE. It is the nucleotide exchange factor for DnaK and may function as a thermosensor. Unfolded proteins bind initially to DnaJ; upon interaction with the DnaJ-bound protein, DnaK hydrolyzes its bound ATP, resulting in the formation of a stable complex. GrpE releases ADP from DnaK; ATP binding to DnaK triggers the release of the substrate protein, thus completing the reaction cycle. Several rounds of ATP-dependent interactions between DnaJ, DnaK and GrpE are required for fully efficient folding. This is Protein GrpE from Treponema denticola (strain ATCC 35405 / DSM 14222 / CIP 103919 / JCM 8153 / KCTC 15104).